A 187-amino-acid chain; its full sequence is Ribosome maturation factor RimP (187 aa).

The protein belongs to the RimP family.

The protein localises to the cytoplasm. In terms of biological role, required for maturation of 30S ribosomal subunits. The sequence is that of Ribosome maturation factor RimP from Phenylobacterium zucineum (strain HLK1).